The chain runs to 172 residues: NADH-quinone oxidoreductase subunit B (172 aa).

[4Fe-4S] cluster contacts are provided by Cys42, Cys43, Cys107, and Cys136.

It belongs to the complex I 20 kDa subunit family. In terms of assembly, NDH-1 is composed of 14 different subunits. Subunits NuoB, C, D, E, F, and G constitute the peripheral sector of the complex. [4Fe-4S] cluster is required as a cofactor.

The protein localises to the cell inner membrane. The enzyme catalyses a quinone + NADH + 5 H(+)(in) = a quinol + NAD(+) + 4 H(+)(out). Functionally, NDH-1 shuttles electrons from NADH, via FMN and iron-sulfur (Fe-S) centers, to quinones in the respiratory chain. The immediate electron acceptor for the enzyme in this species is believed to be ubiquinone. Couples the redox reaction to proton translocation (for every two electrons transferred, four hydrogen ions are translocated across the cytoplasmic membrane), and thus conserves the redox energy in a proton gradient. This is NADH-quinone oxidoreductase subunit B from Sulfurovum sp. (strain NBC37-1).